The following is a 182-amino-acid chain: Isopentenyl-diphosphate Delta-isomerase (182 aa).

Residues His-25 and His-32 each coordinate Mn(2+). A Nudix hydrolase domain is found at 30–164 (LLHLAFSSWL…PWAFSPWMVM (135 aa)). Cys-67 is an active-site residue. Residue His-69 coordinates Mn(2+). Residue Glu-87 participates in Mg(2+) binding. The Mn(2+) site is built by Glu-114 and Glu-116. Residue Glu-116 is part of the active site.

The protein belongs to the IPP isomerase type 1 family. As to quaternary structure, homodimer. It depends on Mg(2+) as a cofactor. Requires Mn(2+) as cofactor.

Its subcellular location is the cytoplasm. The catalysed reaction is isopentenyl diphosphate = dimethylallyl diphosphate. It participates in isoprenoid biosynthesis; dimethylallyl diphosphate biosynthesis; dimethylallyl diphosphate from isopentenyl diphosphate: step 1/1. Catalyzes the 1,3-allylic rearrangement of the homoallylic substrate isopentenyl (IPP) to its highly electrophilic allylic isomer, dimethylallyl diphosphate (DMAPP). The chain is Isopentenyl-diphosphate Delta-isomerase from Escherichia coli O45:K1 (strain S88 / ExPEC).